A 497-amino-acid polypeptide reads, in one-letter code: Probable cytosol aminopeptidase (497 aa).

Mn(2+)-binding residues include Lys267 and Asp272. Lys279 is an active-site residue. Mn(2+) contacts are provided by Asp290, Asp349, and Glu351. Arg353 is a catalytic residue.

The protein belongs to the peptidase M17 family. Mn(2+) serves as cofactor.

It is found in the cytoplasm. It catalyses the reaction Release of an N-terminal amino acid, Xaa-|-Yaa-, in which Xaa is preferably Leu, but may be other amino acids including Pro although not Arg or Lys, and Yaa may be Pro. Amino acid amides and methyl esters are also readily hydrolyzed, but rates on arylamides are exceedingly low.. The catalysed reaction is Release of an N-terminal amino acid, preferentially leucine, but not glutamic or aspartic acids.. In terms of biological role, presumably involved in the processing and regular turnover of intracellular proteins. Catalyzes the removal of unsubstituted N-terminal amino acids from various peptides. The protein is Probable cytosol aminopeptidase of Pseudomonas entomophila (strain L48).